The chain runs to 766 residues: Protein sak1 (766 aa).

A DNA-binding region (RFX-type winged-helix) is located at residues 101-176 (GICWLKRACE…YHYCGIKLRG (76 aa)). A phosphoserine mark is found at S223, S224, and S227. 2 disordered regions span residues 271–308 (PQAH…QPTY) and 708–731 (LQEH…QQQQ). Residues 279–289 (HLSQSNVPPQL) are compositionally biased toward polar residues. Composition is skewed to low complexity over residues 290–308 (SHSS…QPTY) and 715–731 (QQHF…QQQQ).

This sequence belongs to the RFX family.

It is found in the nucleus. Positively regulates cyclic AMP-dependent protein kinase-mediated exit from the mitotic cell cycle. This Schizosaccharomyces pombe (strain 972 / ATCC 24843) (Fission yeast) protein is Protein sak1 (sak1).